The chain runs to 194 residues: Recombination protein RecR (194 aa).

Residues 53 to 68 (CEICFNLDVTSPCSIC) form a C4-type zinc finger. One can recognise a Toprim domain in the interval 76 to 171 (SLLCIVEELG…KVTRLACGIP (96 aa)).

This sequence belongs to the RecR family.

May play a role in DNA repair. It seems to be involved in an RecBC-independent recombinational process of DNA repair. It may act with RecF and RecO. The chain is Recombination protein RecR from Anaplasma phagocytophilum (strain HZ).